Consider the following 575-residue polypeptide: Interleukin-10 receptor subunit alpha (575 aa).

Residues 1–16 (MLSRLLPFLVTISSLS) form the signal peptide. Topologically, residues 17-241 (LEFIAYGTEL…QYFTVTNLSI (225 aa)) are extracellular. N-linked (GlcNAc...) asparagine glycans are attached at residues N50, N66, N113, and N182. The cysteines at positions 204 and 225 are disulfide-linked. The N-linked (GlcNAc...) asparagine glycan is linked to N238. The chain crosses the membrane as a helical span at residues 242–262 (LVISMLLFCGILVCLVLQWYI). At 263–575 (RHPGKLPTVL…PLISSLQVEE (313 aa)) the chain is on the cytoplasmic side. Phosphotyrosine is present on residues Y443 and Y493.

Belongs to the type II cytokine receptor family. As to quaternary structure, interacts with IL10. Interacts with IL10RB. Interacts (via its cytoplasmic domain) with JAK1 (via N-terminus). Interacts with BTRC; this interaction leads to IL10RA ubiquitination and subsequent degradation. Interacts with STAT3. In terms of processing, phosphorylated. Phosphorylation of the cytoplasmic tail induced STAT3 activation. Ubiquitinated by BTRC; ubiquitination leads to endocytosis and subsequent degradation of IL10RA.

The protein resides in the cell membrane. Its subcellular location is the cytoplasm. In terms of biological role, cell surface receptor for the cytokine IL10 that participates in IL10-mediated anti-inflammatory functions, limiting excessive tissue disruption caused by inflammation. Upon binding to IL10, induces a conformational change in IL10RB, allowing IL10RB to bind IL10 as well. In turn, the heterotetrameric assembly complex, composed of two subunits of IL10RA and IL10RB, activates the kinases JAK1 and TYK2 that are constitutively associated with IL10RA and IL10RB respectively. These kinases then phosphorylate specific tyrosine residues in the intracellular domain in IL10RA leading to the recruitment and subsequent phosphorylation of STAT3. Once phosphorylated, STAT3 homodimerizes, translocates to the nucleus and activates the expression of anti-inflammatory genes. In addition, IL10RA-mediated activation of STAT3 inhibits starvation-induced autophagy. In Mus musculus (Mouse), this protein is Interleukin-10 receptor subunit alpha (Il10ra).